Reading from the N-terminus, the 431-residue chain is Glycerol-3-phosphate dehydrogenase [NAD(P)+] (431 aa).

Residues 1–19 show a composition bias toward polar residues; sequence MTSANDKSTDTNVDSTQAE. Residues 1 to 25 form a disordered region; it reads MTSANDKSTDTNVDSTQAEQKMAEK. Serine 79, phenylalanine 80, arginine 100, and lysine 173 together coordinate NADPH. Sn-glycerol 3-phosphate is bound by residues lysine 173 and glycine 201. Residue alanine 205 coordinates NADPH. 5 residues coordinate sn-glycerol 3-phosphate: lysine 256, aspartate 309, serine 319, arginine 320, and asparagine 321. The active-site Proton acceptor is the lysine 256. An NADPH-binding site is contributed by arginine 320. Glutamate 346 contacts NADPH.

Belongs to the NAD-dependent glycerol-3-phosphate dehydrogenase family.

It is found in the cytoplasm. The enzyme catalyses sn-glycerol 3-phosphate + NAD(+) = dihydroxyacetone phosphate + NADH + H(+). It catalyses the reaction sn-glycerol 3-phosphate + NADP(+) = dihydroxyacetone phosphate + NADPH + H(+). Its pathway is membrane lipid metabolism; glycerophospholipid metabolism. Catalyzes the reduction of the glycolytic intermediate dihydroxyacetone phosphate (DHAP) to sn-glycerol 3-phosphate (G3P), the key precursor for phospholipid synthesis. This is Glycerol-3-phosphate dehydrogenase [NAD(P)+] from Psychrobacter arcticus (strain DSM 17307 / VKM B-2377 / 273-4).